The sequence spans 161 residues: Cyclic pyranopterin monophosphate synthase (161 aa).

Substrate-binding positions include 75–77 (MCH) and 115–116 (ME). Asp130 is a catalytic residue.

Belongs to the MoaC family. As to quaternary structure, homohexamer; trimer of dimers.

It catalyses the reaction (8S)-3',8-cyclo-7,8-dihydroguanosine 5'-triphosphate = cyclic pyranopterin phosphate + diphosphate. Its pathway is cofactor biosynthesis; molybdopterin biosynthesis. In terms of biological role, catalyzes the conversion of (8S)-3',8-cyclo-7,8-dihydroguanosine 5'-triphosphate to cyclic pyranopterin monophosphate (cPMP). This chain is Cyclic pyranopterin monophosphate synthase, found in Bacillus cereus (strain 03BB102).